Reading from the N-terminus, the 464-residue chain is MREKTPKQIVDLLDKYIVGQNEAKKSVAIALYNRYRRTQLPEDVQKDITPKNILMAGPTGVGKTEIARRLADIVDAPFVKVEATKFTEVGYVGRDVESMVRDLANEAVRIVEKEEFVKVESQAIRQANKTLVRLLVPGVKRNNRQNQMQQMQEMMQSLLAGGGMPEETEEVTDEIRNQRLSVAEKLDRGLLENEEVTIEVEQAPKANPMGDMMGQMGMDMSSMLGDMLPKKKVKRTLPVGQARKLLVQEEEKKLVNYDDIYQKAMDRAGQSGIIFIDEIDKITAADKRNSAGVSREGVQRDILPIVEGSTVSTKYGPLSTDHILFIAAGAFAESKPSDLIPELQGRFPIRVELNALTKDDFVRILKDPQNSLLKQYIALLKADGVDLVFTAEAVDKIAEIAFEVNQGTDNIGARRLATILEKLLEEVLYEGPDMEMGQITITQAYVEQKLSDIVKNKDLTKFIL.

ATP contacts are provided by residues Val-18, 60–65, Asp-277, Glu-342, and Arg-414; that span reads GVGKTE.

Belongs to the ClpX chaperone family. HslU subfamily. As to quaternary structure, a double ring-shaped homohexamer of HslV is capped on each side by a ring-shaped HslU homohexamer. The assembly of the HslU/HslV complex is dependent on binding of ATP.

The protein localises to the cytoplasm. Functionally, ATPase subunit of a proteasome-like degradation complex; this subunit has chaperone activity. The binding of ATP and its subsequent hydrolysis by HslU are essential for unfolding of protein substrates subsequently hydrolyzed by HslV. HslU recognizes the N-terminal part of its protein substrates and unfolds these before they are guided to HslV for hydrolysis. This is ATP-dependent protease ATPase subunit HslU from Lactobacillus delbrueckii subsp. bulgaricus (strain ATCC 11842 / DSM 20081 / BCRC 10696 / JCM 1002 / NBRC 13953 / NCIMB 11778 / NCTC 12712 / WDCM 00102 / Lb 14).